Here is a 495-residue protein sequence, read N- to C-terminus: MKLAPAFPRSYFMGRFWAGNTTGDGLEQTWLDGYYRYTKRGKVFARKTELNNWSLIFPSELSHDWRNLPLDQISFQHWAQEGGKIKHHTVLTKAHSKVALLFAKKELLLAVQKILVKETLSLLPGIIGDKWVSLDLMQVCSDLVIKLNARILYGPAYADDQDFHKRLITFANGVDGINSIYFTWPRSLWKIVSLVHPTIRGFYANLPHLKKRMLPDIRSRIAKLQAKAAQGEGKVPASDEDVTFMTALIKMHMEEGTLGEQDSDLEKVCMEAVFYTYEFWGPIMPTLFFMLMAIGKNPGYLQALREEISSALESNDWSSDFLARTPKLESFIREVLRLYVPAQWLITDIHRASLATVSRRTEKPIYVQSMDMHIPAGVNLCVPAKYIHRDPDFYPNPTTFDGFRFYDPVTNNVTIRATTATDTYLSFSHGSGLCPGRVFGAHVVQVLCAVFIMEYDVKVDPSKTFPDVQSTKEGRGDGMVGTTDILIRKRTSAKV.

Cysteine 434 is a binding site for heme.

The protein belongs to the cytochrome P450 family. The cofactor is heme.

It participates in alkaloid biosynthesis. Its function is as follows. Cytochrome P450 monooxygenase; part of the gene cluster that mediates the biosynthesis of communesins, a prominent class of indole alkaloids with great potential as pharmaceuticals. Communesins are biosynthesized by the coupling of tryptamine and aurantioclavine, two building blocks derived from L-tryptophan. The L-tryptophan decarboxylase cnsB converts L-tryptophan to tryptamine, whereas the tryptophan dimethylallyltransferase cnsF converts L-tryptophan to 4-dimethylallyl tryptophan which is further transformed to aurantioclavine by the aurantioclavine synthase cnsA, probably aided by the catalase cnsD. The cytochrome P450 monooxygenase cnsC catalyzes the heterodimeric coupling between the two different indole moieties, tryptamine and aurantioclavine, to construct vicinal quaternary stereocenters and yield the heptacyclic communesin scaffold. The O-methyltransferase cnsE then methylates the communesin scaffold to produce communesin K, the simplest characterized communesin that contains the heptacyclic core. The dioxygenase cnsJ converts communesin K into communesin I. Acylation to introduce the hexadienyl group at position N16 of communesin I by the acyltransferase cnsK leads to the production of communesin B. The hexadienyl group is produced by the highly reducing polyketide synthase cnsI, before being hydrolytically removed from cnsI by the serine hydrolase cnsH, converted into hexadienyl-CoA by the CoA ligase cnsG, and then transferred to communesin I by cnsK. Surprisingly, cnsK may also be a promiscuous acyltransferase that can tolerate a range of acyl groups, including acetyl-, propionyl-, and butyryl-CoA, which lead to communesins A, G and H respectively. The roles of the alpha-ketoglutarate-dependent dioxygenases cnsM and cnsP have still to be determined. This Penicillium expansum (Blue mold rot fungus) protein is Cytochrome P450 monooxygenase cnsC.